The following is a 153-amino-acid chain: MLRITYKLPIALRQQAFVARKLVPTIKANYSTNSDDDVVSRIKVHPIKRINESIDKKRARLIYQSRKRGILETDLLLSGFAAKHLRSMTNEELDEYDALLNELDWDIYYWVTKNYKTSPVPERWKNSEILKKLQDFSENKEKKILRMPDLENY.

Belongs to the SDHAF2 family. In terms of assembly, interacts with the flavoprotein subunit within the SDH catalytic dimer.

It localises to the mitochondrion matrix. Its function is as follows. Plays an essential role in the assembly of succinate dehydrogenase (SDH), an enzyme complex (also referred to as respiratory complex II) that is a component of both the tricarboxylic acid (TCA) cycle and the mitochondrial electron transport chain, and which couples the oxidation of succinate to fumarate with the reduction of ubiquinone (coenzyme Q) to ubiquinol. Required for flavinylation (covalent attachment of FAD) of the flavoprotein subunit of the SDH catalytic dimer. The protein is Succinate dehydrogenase assembly factor 2, mitochondrial of Candida glabrata (strain ATCC 2001 / BCRC 20586 / JCM 3761 / NBRC 0622 / NRRL Y-65 / CBS 138) (Yeast).